We begin with the raw amino-acid sequence, 421 residues long: Fasciclin-like arabinogalactan protein ARB_02922 (421 aa).

A signal peptide spans 1-17 (MLLYYILVALWATVTYA). FAS1 domains follow at residues 18–167 (KSFS…DRPL) and 169–296 (LPQS…SDVL). Residues N52, N75, N80, N120, N145, N181, N223, and N300 are each glycosylated (N-linked (GlcNAc...) asparagine). Positions 300–401 (NDTAKPVPNA…NTPQPGAAAT (102 aa)) are disordered. 2 stretches are compositionally biased toward gly residues: residues 344 to 356 (TSGG…GGGE) and 372 to 387 (SGGG…GGPG). A compositionally biased stretch (low complexity) spans 388–401 (PTATNTPQPGAAAT). G397 carries GPI-anchor amidated glycine lipidation. Residues 398–421 (AAATERAKAGLAAVVGLGVVLINA) constitute a propeptide, removed in mature form.

Belongs to the fasciclin-like AGP family.

It is found in the cell membrane. Functionally, may be a cell surface adhesion protein. This Arthroderma benhamiae (strain ATCC MYA-4681 / CBS 112371) (Trichophyton mentagrophytes) protein is Fasciclin-like arabinogalactan protein ARB_02922.